Here is a 75-residue protein sequence, read N- to C-terminus: Penaeidin-3n (75 aa).

An N-terminal signal peptide occupies residues Met-1–Gly-19. The residue at position 20 (Gln-20) is a Pyrrolidone carboxylic acid. Cystine bridges form between Cys-44–Cys-59 and Cys-48–Cys-66. Serine amide is present on Ser-74.

The protein belongs to the penaeidin family.

It is found in the cytoplasmic granule. In terms of biological role, antibacterial and antifungal activity. Presents chitin-binding activity. The polypeptide is Penaeidin-3n (Penaeus setiferus (Atlantic white shrimp)).